Consider the following 239-residue polypeptide: NADH-quinone oxidoreductase chain 2 (239 aa).

[2Fe-2S] cluster-binding residues include cysteine 96, cysteine 101, cysteine 137, and cysteine 141.

It belongs to the complex I 24 kDa subunit family. NDH-1 is composed of at least 14 different subunits, Nqo1 to Nqo14. The complex has a L-shaped structure, with the hydrophobic arm (subunits Nqo7, Nqo8, Nqo10 to Nqo14) embedded in the inner membrane and the hydrophilic peripheral arm (subunits Nqo1 to Nqo6, Nqo9) protruding into the bacterial cytoplasm. The hydrophilic domain contains all the redox centers. The cofactor is [2Fe-2S] cluster.

It is found in the cell inner membrane. The enzyme catalyses a quinone + NADH + 5 H(+)(in) = a quinol + NAD(+) + 4 H(+)(out). In terms of biological role, NDH-1 shuttles electrons from NADH, via FMN and iron-sulfur (Fe-S) centers, to quinones in the respiratory chain. The immediate electron acceptor for the enzyme in this species is believed to be ubiquinone. Couples the redox reaction to proton translocation (for every two electrons transferred, four hydrogen ions are translocated across the cytoplasmic membrane), and thus conserves the redox energy in a proton gradient. This is NADH-quinone oxidoreductase chain 2 (nqo2) from Paracoccus denitrificans.